The chain runs to 130 residues: Glycine cleavage system H protein (130 aa).

Positions 23–105 (IGIIGITDFA…YGKGWMIKVE (83 aa)) constitute a Lipoyl-binding domain. An N6-lipoyllysine modification is found at K64.

Belongs to the GcvH family. In terms of assembly, the glycine cleavage system is composed of four proteins: P, T, L and H. Requires (R)-lipoate as cofactor.

In terms of biological role, the glycine cleavage system catalyzes the degradation of glycine. The H protein shuttles the methylamine group of glycine from the P protein to the T protein. The sequence is that of Glycine cleavage system H protein from Carboxydothermus hydrogenoformans (strain ATCC BAA-161 / DSM 6008 / Z-2901).